Here is a 148-residue protein sequence, read N- to C-terminus: Lysozyme C, milk isozyme (148 aa).

An N-terminal signal peptide occupies residues 1–18 (MKALLIVGLLLLSVAVQG). The region spanning 19-148 (KKFQRCELAR…LRSYVQGCRV (130 aa)) is the C-type lysozyme domain. 4 disulfides stabilise this stretch: Cys24-Cys146, Cys48-Cys134, Cys83-Cys99, and Cys95-Cys113. Active-site residues include Glu53 and Asp71.

The protein belongs to the glycosyl hydrolase 22 family.

The enzyme catalyses Hydrolysis of (1-&gt;4)-beta-linkages between N-acetylmuramic acid and N-acetyl-D-glucosamine residues in a peptidoglycan and between N-acetyl-D-glucosamine residues in chitodextrins.. Lysozymes have primarily a bacteriolytic function; those in tissues and body fluids are associated with the monocyte-macrophage system and enhance the activity of immunoagents. The protein is Lysozyme C, milk isozyme of Bos taurus (Bovine).